The primary structure comprises 236 residues: Phosphoribosylaminoimidazole-succinocarboxamide synthase (236 aa).

This sequence belongs to the SAICAR synthetase family.

The enzyme catalyses 5-amino-1-(5-phospho-D-ribosyl)imidazole-4-carboxylate + L-aspartate + ATP = (2S)-2-[5-amino-1-(5-phospho-beta-D-ribosyl)imidazole-4-carboxamido]succinate + ADP + phosphate + 2 H(+). The protein operates within purine metabolism; IMP biosynthesis via de novo pathway; 5-amino-1-(5-phospho-D-ribosyl)imidazole-4-carboxamide from 5-amino-1-(5-phospho-D-ribosyl)imidazole-4-carboxylate: step 1/2. This Lactococcus lactis subsp. cremoris (Streptococcus cremoris) protein is Phosphoribosylaminoimidazole-succinocarboxamide synthase (purC).